The chain runs to 289 residues: Diacylglycerol pyrophosphate phosphatase 1 (289 aa).

The Vacuolar segment spans residues 1 to 21; the sequence is MNRVSFIKTPFNIGAKWRLED. The chain crosses the membrane as a helical span at residues 22-42; the sequence is VFLLIIMILLNYPVYYQQPFE. Residues 43 to 65 are Cytoplasmic-facing; that stretch reads RQFYINDLTISHPYATTERVNNN. Residues 66 to 86 form a helical membrane-spanning segment; sequence MLFVYSFVVPSLTILIIGSIL. Residues 87 to 92 lie on the Vacuolar side of the membrane; sequence ADRRHL. Residues 93–113 traverse the membrane as a helical segment; the sequence is IFILYTSLLGLSLAWFSTSFF. Topologically, residues 114 to 172 are cytoplasmic; that stretch reads TNFIKNWIGRLRPDFLDRCQPVEGLPLDTLFTAKDVCTTKNHERLLDGFRTTPSGHSSE. The phosphatase sequence motif I stretch occupies residues 118 to 126; sequence KNWIGRLRP. Residues 166 to 169 form a phosphatase sequence motif II region; the sequence is PSGH. Transmembrane regions (helical) follow at residues 173 to 193 and 194 to 214; these read SFAG…TESP and LMPL…ALIA. Residues 215–222 lie on the Cytoplasmic side of the membrane; it reads LSRTQDYR. The phosphatase sequence motif III stretch occupies residues 216 to 227; that stretch reads SRTQDYRHHFVD. A helical membrane pass occupies residues 223–243; that stretch reads HHFVDVILGSMLGYIMAHFFY. At 244–289 the chain is on the vacuolar side; it reads RRIFPPIDDPLPFKPLMDDSDVTLEEAVTHQRIPDEELHPLSDEGM. Phosphoserine is present on Ser-285.

It belongs to the PA-phosphatase related phosphoesterase family.

It localises to the vacuole membrane. The catalysed reaction is a 1,2-diacyl-sn-glycerol 3-diphosphate + H2O = a 1,2-diacyl-sn-glycero-3-phosphate + phosphate + H(+). It catalyses the reaction a 1,2-diacyl-sn-glycero-3-phosphate + H2O = a 1,2-diacyl-sn-glycerol + phosphate. It carries out the reaction a 1-acyl-sn-glycero-3-phosphate + H2O = a 1-acyl-sn-glycerol + phosphate. With respect to regulation, inhibited by sodium fluoride (NaF) and pyrophosphate. Strongly inhibited by manganese ion and, to a lower extent, by magnesium and calcium ions. Also inhibited by Cu(2+) ion. In an indirect manner, it is also inhibited by the zinc ion which is able to form a complex with DGPP and prevent the enzyme from removing the phosphate from the substrate. Not inhibited by N-ethylmaleimide. Its function is as follows. Catalyzes the dephosphorylation of diacylglycerol diphosphate (DGPP) to phosphatidate (PA) and the subsequent dephosphorylation of PA to diacylglycerol (DAG). Together with LPP1, regulates intracellular DGPP and PA levels, which are phospholipid molecules believed to play a signaling role in stress response. Can also use lysophosphatidic acid (LPA) and phosphatidylglycerophosphate as substrates. Substrate preference is DGPP &gt; LPA &gt; PA. Activity is independent of a divalent cation ion and insensitive to inhibition by N-ethylmaleimide. The chain is Diacylglycerol pyrophosphate phosphatase 1 (DPP1) from Saccharomyces cerevisiae (strain ATCC 204508 / S288c) (Baker's yeast).